A 309-amino-acid polypeptide reads, in one-letter code: ATP synthase gamma chain (309 aa).

Belongs to the ATPase gamma chain family. In terms of assembly, F-type ATPases have 2 components, CF(1) - the catalytic core - and CF(0) - the membrane proton channel. CF(1) has five subunits: alpha(3), beta(3), gamma(1), delta(1), epsilon(1). CF(0) has three main subunits: a, b and c.

The protein resides in the cell membrane. Produces ATP from ADP in the presence of a proton gradient across the membrane. The gamma chain is believed to be important in regulating ATPase activity and the flow of protons through the CF(0) complex. The protein is ATP synthase gamma chain of Mycobacterium sp. (strain JLS).